The following is a 267-amino-acid chain: 3-methyl-2-oxobutanoate hydroxymethyltransferase (267 aa).

Residues Asp-45 and Asp-84 each coordinate Mg(2+). 3-methyl-2-oxobutanoate contacts are provided by residues 45–46, Asp-84, and Lys-113; that span reads DS. Mg(2+) is bound at residue Glu-115. The active-site Proton acceptor is the Glu-182.

It belongs to the PanB family. Homodecamer; pentamer of dimers. It depends on Mg(2+) as a cofactor.

The protein localises to the cytoplasm. The enzyme catalyses 3-methyl-2-oxobutanoate + (6R)-5,10-methylene-5,6,7,8-tetrahydrofolate + H2O = 2-dehydropantoate + (6S)-5,6,7,8-tetrahydrofolate. It participates in cofactor biosynthesis; coenzyme A biosynthesis. In terms of biological role, catalyzes the reversible reaction in which hydroxymethyl group from 5,10-methylenetetrahydrofolate is transferred onto alpha-ketoisovalerate to form ketopantoate. The polypeptide is 3-methyl-2-oxobutanoate hydroxymethyltransferase (Saccharolobus islandicus (strain M.16.27) (Sulfolobus islandicus)).